The sequence spans 75 residues: Carwaprin-a (75 aa).

Positions Met1–Gly24 are cleaved as a signal peptide. The WAP domain maps to Arg27–Ile72. Cystine bridges form between Cys34-Cys60, Cys43-Cys64, Cys47-Cys59, and Cys53-Cys68.

Belongs to the venom waprin family. In terms of tissue distribution, expressed by the venom gland.

Its subcellular location is the secreted. Functionally, damages membranes of susceptible bacteria. Has no hemolytic activity. Not toxic to mice. Does not inhibit the proteinases elastase and cathepsin G. The chain is Carwaprin-a from Tropidechis carinatus (Australian rough-scaled snake).